Reading from the N-terminus, the 155-residue chain is Small ribosomal subunit protein uS7 (155 aa).

It belongs to the universal ribosomal protein uS7 family. As to quaternary structure, part of the 30S ribosomal subunit. Contacts proteins S9 and S11.

In terms of biological role, one of the primary rRNA binding proteins, it binds directly to 16S rRNA where it nucleates assembly of the head domain of the 30S subunit. Is located at the subunit interface close to the decoding center, probably blocks exit of the E-site tRNA. The sequence is that of Small ribosomal subunit protein uS7 from Nautilia profundicola (strain ATCC BAA-1463 / DSM 18972 / AmH).